The chain runs to 300 residues: ATP-dependent (S)-NAD(P)H-hydrate dehydratase (300 aa).

The YjeF C-terminal domain maps to 14–293 (LLTLFKTIVP…NEISAVFRSD (280 aa)). (6S)-NADPHX-binding positions include Gly114 and 167–173 (NAMEFRR). ATP-binding positions include 198–202 (KGVND) and 219–228 (GSGRRCGGQG). Asp229 is a (6S)-NADPHX binding site.

The protein belongs to the NnrD/CARKD family. It depends on Mg(2+) as a cofactor.

The enzyme catalyses (6S)-NADHX + ATP = ADP + phosphate + NADH + H(+). It catalyses the reaction (6S)-NADPHX + ATP = ADP + phosphate + NADPH + H(+). Catalyzes the dehydration of the S-form of NAD(P)HX at the expense of ATP, which is converted to ADP. Together with NAD(P)HX epimerase, which catalyzes the epimerization of the S- and R-forms, the enzyme allows the repair of both epimers of NAD(P)HX, a damaged form of NAD(P)H that is a result of enzymatic or heat-dependent hydration. This chain is ATP-dependent (S)-NAD(P)H-hydrate dehydratase, found in Drosophila pseudoobscura pseudoobscura (Fruit fly).